A 457-amino-acid chain; its full sequence is Trigger factor (457 aa).

The region spanning G162 to P243 is the PPIase FKBP-type domain. The segment at A434–K457 is disordered. Residues S440–K457 show a composition bias toward acidic residues.

It belongs to the FKBP-type PPIase family. Tig subfamily.

It is found in the cytoplasm. The enzyme catalyses [protein]-peptidylproline (omega=180) = [protein]-peptidylproline (omega=0). Involved in protein export. Acts as a chaperone by maintaining the newly synthesized protein in an open conformation. Functions as a peptidyl-prolyl cis-trans isomerase. The chain is Trigger factor from Rhodococcus erythropolis (strain PR4 / NBRC 100887).